We begin with the raw amino-acid sequence, 49 residues long: Small, acid-soluble spore protein O (49 aa).

A disordered region spans residues Met-1–Gln-49. The segment covering His-8–Gly-20 has biased composition (polar residues).

It belongs to the SspO family.

The protein localises to the spore core. In Bacillus cereus (strain G9842), this protein is Small, acid-soluble spore protein O.